A 624-amino-acid chain; its full sequence is tRNA uridine 5-carboxymethylaminomethyl modification enzyme MnmG (624 aa).

FAD-binding positions include Gly16–Gly21, Val128, and Ser183. Gly275–Phe289 is a binding site for NAD(+). An FAD-binding site is contributed by Gln372.

This sequence belongs to the MnmG family. As to quaternary structure, homodimer. Heterotetramer of two MnmE and two MnmG subunits. FAD serves as cofactor.

Its subcellular location is the cytoplasm. Its function is as follows. NAD-binding protein involved in the addition of a carboxymethylaminomethyl (cmnm) group at the wobble position (U34) of certain tRNAs, forming tRNA-cmnm(5)s(2)U34. The sequence is that of tRNA uridine 5-carboxymethylaminomethyl modification enzyme MnmG from Geobacter metallireducens (strain ATCC 53774 / DSM 7210 / GS-15).